The sequence spans 642 residues: A-kinase anchor protein 8-like (642 aa).

The interval 1–269 (MSYTGFVQGS…MRRTWKTWTT (269 aa)) is sufficient for activation of CTE-mediated expression. Arg209 carries the asymmetric dimethylarginine; alternate modification. The residue at position 209 (Arg209) is an Omega-N-methylarginine; alternate. Omega-N-methylarginine is present on residues Arg218, Arg238, and Arg248. Position 258 is an N6-acetyllysine (Lys258). Residues 265–382 (KTWTTADFRT…QDKQKKRQRD (118 aa)) form a disordered region. Thr268 carries the post-translational modification Phosphothreonine. The Nuclear localization signal motif lies at 275–280 (KKKKRK). The short motif at 281–297 (QGGSPDEPDSKATRTDC) is the Nuclear export signal (NES) element. Phosphoserine is present on Ser284. Positions 288 to 297 (PDSKATRTDC) are enriched in basic and acidic residues. Thr293 bears the Phosphothreonine mark. Ser298 bears the Phosphoserine mark. Acidic residues predominate over residues 299 to 315 (DNSDSDNDEGTEGEAAE). Residues 338–350 (EDGREEGKEDPEK) show a composition bias toward basic and acidic residues. Residues 363-365 (KRK) carry the Nuclear localization signal motif. C2H2 AKAP95-type zinc fingers lie at residues 392–414 (CSLC…SKFH) and 485–508 (CAAC…TMDH). Residues 546 to 642 (GENPFTDNPE…EDDEEGGGGP (97 aa)) are disordered. Acidic residues predominate over residues 553 to 564 (NPEEEKEQDEVE). A compositionally biased stretch (pro residues) spans 585 to 605 (AQPPVPLEPAPGTTTPPPPPP). A compositionally biased stretch (acidic residues) spans 631–642 (DMEDDEEGGGGP).

This sequence belongs to the AKAP95 family. Interacts (via N-terminus) with DHX9 (via RGG region). Interacts with TMPO isoform Beta, PRPF40A, RNF43, lamin-B. Interacts with HDAC3; increased during mitosis. Post-translationally, phosphorylated on serine or threonine residues possibly by PKA.

The protein localises to the nucleus. The protein resides in the nucleus matrix. Its subcellular location is the nucleus speckle. It localises to the PML body. It is found in the cytoplasm. Could play a role in constitutive transport element (CTE)-mediated gene expression by association with DHX9. Increases CTE-dependent nuclear unspliced mRNA export. Proposed to target PRKACA to the nucleus but does not seem to be implicated in the binding of regulatory subunit II of PKA. May be involved in nuclear envelope breakdown and chromatin condensation. May be involved in anchoring nuclear membranes to chromatin in interphase and in releasing membranes from chromating at mitosis. May regulate the initiation phase of DNA replication when associated with TMPO isoform Beta. Required for cell cycle G2/M transition and histone deacetylation during mitosis. In mitotic cells recruits HDAC3 to the vicinity of chromatin leading to deacetylation and subsequent phosphorylation at 'Ser-10' of histone H3; in this function seems to act redundantly with AKAP8. May be involved in regulation of pre-mRNA splicing. This is A-kinase anchor protein 8-like (Akap8l) from Mus musculus (Mouse).